A 361-amino-acid chain; its full sequence is Phospho-N-acetylmuramoyl-pentapeptide-transferase (361 aa).

Transmembrane regions (helical) follow at residues 25-45 (RTVLAALTALIISFIVGPAMI), 73-93 (TMGGALILVSIAITTLLWADL), 97-117 (YVWIVLITTLGFGMIGWVDDY), 134-154 (LFWQSAIAILVALYLVLTAEL), 168-188 (VAVPLGVTGFVALTYFVIVGT), 200-220 (GLAIMPTVMISSALAIFSYVA), 237-257 (AGELAVFCGALAGAGLAFLWF), 264-284 (VFMGDVGALALGAALGIVTVI), 289-309 (IVMLIMGGVFVVETLSVMLQV), and 338-358 (QVVVRFWIITMMLVLFGLSSL).

This sequence belongs to the glycosyltransferase 4 family. MraY subfamily. Requires Mg(2+) as cofactor.

It localises to the cell inner membrane. It carries out the reaction UDP-N-acetyl-alpha-D-muramoyl-L-alanyl-gamma-D-glutamyl-meso-2,6-diaminopimeloyl-D-alanyl-D-alanine + di-trans,octa-cis-undecaprenyl phosphate = di-trans,octa-cis-undecaprenyl diphospho-N-acetyl-alpha-D-muramoyl-L-alanyl-D-glutamyl-meso-2,6-diaminopimeloyl-D-alanyl-D-alanine + UMP. It functions in the pathway cell wall biogenesis; peptidoglycan biosynthesis. In terms of biological role, catalyzes the initial step of the lipid cycle reactions in the biosynthesis of the cell wall peptidoglycan: transfers peptidoglycan precursor phospho-MurNAc-pentapeptide from UDP-MurNAc-pentapeptide onto the lipid carrier undecaprenyl phosphate, yielding undecaprenyl-pyrophosphoryl-MurNAc-pentapeptide, known as lipid I. This Nitrosospira multiformis (strain ATCC 25196 / NCIMB 11849 / C 71) protein is Phospho-N-acetylmuramoyl-pentapeptide-transferase.